The chain runs to 261 residues: MFELFTALMLGILEGITEFLPVSSTGHLLIAEHWLGSRSDFFNIVIQAGAILAITFVFRKKVWSLATGLDKYSNRDYVMKLATAFLITAVVGLAVRKANWQLPETIQPIAWALIIGGIWILIAESVAKHLPERENVTWSVAIAVGLAQVVAGVFPGTSRSASTIFLAMLLGLSKRSAAAEFSFLVGIPTMFSASSYACFELFKRGELLHENWLEVSVAFVAAMLTGFAVVKWLLGYIKNHSFAPFAYYRIALGLVLLTWLT.

7 helical membrane passes run arginine 38 to phenylalanine 58, arginine 75 to valine 95, isoleucine 106 to valine 126, valine 136 to glycine 156, phenylalanine 181 to leucine 201, valine 217 to isoleucine 237, and serine 241 to threonine 261.

This sequence belongs to the UppP family.

The protein resides in the cell inner membrane. It catalyses the reaction di-trans,octa-cis-undecaprenyl diphosphate + H2O = di-trans,octa-cis-undecaprenyl phosphate + phosphate + H(+). Its function is as follows. Catalyzes the dephosphorylation of undecaprenyl diphosphate (UPP). Confers resistance to bacitracin. This is Undecaprenyl-diphosphatase from Xylella fastidiosa (strain Temecula1 / ATCC 700964).